The chain runs to 372 residues: NAD(P)H-quinone oxidoreductase subunit 1 (372 aa).

A run of 8 helical transmembrane segments spans residues Trp-29–Val-49, Trp-97–Val-117, Val-130–Gly-150, Leu-176–Val-196, Ile-204–Leu-224, Phe-254–Ile-274, Ser-308–Leu-328, and Phe-347–Pro-367.

The protein belongs to the complex I subunit 1 family. In terms of assembly, NDH-1 is composed of at least 11 different subunits.

The protein localises to the cellular thylakoid membrane. The enzyme catalyses a plastoquinone + NADH + (n+1) H(+)(in) = a plastoquinol + NAD(+) + n H(+)(out). The catalysed reaction is a plastoquinone + NADPH + (n+1) H(+)(in) = a plastoquinol + NADP(+) + n H(+)(out). In terms of biological role, NDH-1 shuttles electrons from an unknown electron donor, via FMN and iron-sulfur (Fe-S) centers, to quinones in the respiratory and/or the photosynthetic chain. The immediate electron acceptor for the enzyme in this species is believed to be plastoquinone. Couples the redox reaction to proton translocation, and thus conserves the redox energy in a proton gradient. This chain is NAD(P)H-quinone oxidoreductase subunit 1, found in Rippkaea orientalis (strain PCC 8801 / RF-1) (Cyanothece sp. (strain PCC 8801)).